The chain runs to 252 residues: 2-succinyl-6-hydroxy-2,4-cyclohexadiene-1-carboxylate synthase (252 aa).

Belongs to the AB hydrolase superfamily. MenH family. As to quaternary structure, monomer.

It carries out the reaction 5-enolpyruvoyl-6-hydroxy-2-succinyl-cyclohex-3-ene-1-carboxylate = (1R,6R)-6-hydroxy-2-succinyl-cyclohexa-2,4-diene-1-carboxylate + pyruvate. It participates in quinol/quinone metabolism; 1,4-dihydroxy-2-naphthoate biosynthesis; 1,4-dihydroxy-2-naphthoate from chorismate: step 3/7. Its pathway is quinol/quinone metabolism; menaquinone biosynthesis. Functionally, catalyzes a proton abstraction reaction that results in 2,5-elimination of pyruvate from 2-succinyl-5-enolpyruvyl-6-hydroxy-3-cyclohexene-1-carboxylate (SEPHCHC) and the formation of 2-succinyl-6-hydroxy-2,4-cyclohexadiene-1-carboxylate (SHCHC). The chain is 2-succinyl-6-hydroxy-2,4-cyclohexadiene-1-carboxylate synthase from Escherichia fergusonii (strain ATCC 35469 / DSM 13698 / CCUG 18766 / IAM 14443 / JCM 21226 / LMG 7866 / NBRC 102419 / NCTC 12128 / CDC 0568-73).